A 77-amino-acid chain; its full sequence is MKLLLFTALVLVVIVSLIEAEAENERACLAEYKVCTDDTGNCCSNLVCDCYRRSKHGVPKGRSCFCLEKDVRYTREI.

An N-terminal signal peptide occupies residues 1–20 (MKLLLFTALVLVVIVSLIEA). A propeptide spanning residues 21-26 (EAENER) is cleaved from the precursor.

The protein belongs to the neurotoxin 19 (CSTX) family. 08 (U8-Lctx) subfamily. In terms of processing, contains 4 disulfide bonds. Expressed by the venom gland.

The protein localises to the secreted. The chain is U9-lycotoxin-Ls1a from Lycosa singoriensis (Wolf spider).